The primary structure comprises 212 residues: A-kinase-interacting protein 1 (212 aa).

In terms of assembly, interacts with PRKACA and RELA.

The protein localises to the nucleus. Functionally, enhances NF-kappa-B transcriptional activity by regulating the nuclear localization of the NF-kappa-B subunit RELA and promoting the phosphorylation of RELA by PRKACA. Regulates the effect of the cAMP-dependent protein kinase signaling pathway on the NF-kappa-B activation cascade. This Mus musculus (Mouse) protein is A-kinase-interacting protein 1 (Akip1).